Consider the following 492-residue polypeptide: 3-octaprenyl-4-hydroxybenzoate carboxy-lyase (492 aa).

Asn175 is a Mn(2+) binding site. Residues Ile178–Arg180, Arg192–Leu194, and Arg197–Gly198 each bind prenylated FMN. Residue Glu241 participates in Mn(2+) binding. Catalysis depends on Asp290, which acts as the Proton donor.

This sequence belongs to the UbiD family. As to quaternary structure, homohexamer. Requires prenylated FMN as cofactor. Mn(2+) serves as cofactor.

The protein localises to the cell membrane. The catalysed reaction is a 4-hydroxy-3-(all-trans-polyprenyl)benzoate + H(+) = a 2-(all-trans-polyprenyl)phenol + CO2. It participates in cofactor biosynthesis; ubiquinone biosynthesis. In terms of biological role, catalyzes the decarboxylation of 3-octaprenyl-4-hydroxy benzoate to 2-octaprenylphenol, an intermediate step in ubiquinone biosynthesis. The protein is 3-octaprenyl-4-hydroxybenzoate carboxy-lyase of Salmonella typhimurium (strain LT2 / SGSC1412 / ATCC 700720).